Consider the following 60-residue polypeptide: Large ribosomal subunit protein uL30 (60 aa).

The protein belongs to the universal ribosomal protein uL30 family. As to quaternary structure, part of the 50S ribosomal subunit.

In Idiomarina loihiensis (strain ATCC BAA-735 / DSM 15497 / L2-TR), this protein is Large ribosomal subunit protein uL30.